The following is a 155-amino-acid chain: SsrA-binding protein (155 aa).

Belongs to the SmpB family.

It is found in the cytoplasm. In terms of biological role, required for rescue of stalled ribosomes mediated by trans-translation. Binds to transfer-messenger RNA (tmRNA), required for stable association of tmRNA with ribosomes. tmRNA and SmpB together mimic tRNA shape, replacing the anticodon stem-loop with SmpB. tmRNA is encoded by the ssrA gene; the 2 termini fold to resemble tRNA(Ala) and it encodes a 'tag peptide', a short internal open reading frame. During trans-translation Ala-aminoacylated tmRNA acts like a tRNA, entering the A-site of stalled ribosomes, displacing the stalled mRNA. The ribosome then switches to translate the ORF on the tmRNA; the nascent peptide is terminated with the 'tag peptide' encoded by the tmRNA and targeted for degradation. The ribosome is freed to recommence translation, which seems to be the essential function of trans-translation. The chain is SsrA-binding protein from Streptococcus pneumoniae (strain P1031).